The sequence spans 100 residues: Large ribosomal subunit protein uL23 (100 aa).

The protein belongs to the universal ribosomal protein uL23 family. As to quaternary structure, part of the 50S ribosomal subunit. Contacts protein L29, and trigger factor when it is bound to the ribosome.

In terms of biological role, one of the early assembly proteins it binds 23S rRNA. One of the proteins that surrounds the polypeptide exit tunnel on the outside of the ribosome. Forms the main docking site for trigger factor binding to the ribosome. This Novosphingobium aromaticivorans (strain ATCC 700278 / DSM 12444 / CCUG 56034 / CIP 105152 / NBRC 16084 / F199) protein is Large ribosomal subunit protein uL23.